The chain runs to 545 residues: Afadin- and alpha-actinin-binding protein B (545 aa).

Coiled-coil stretches lie at residues 106–287 (RSKE…SQRK) and 358–442 (ARGD…AIRL). Residues 497–545 (HDRHLASSGDHYQRPRKTLPITPSSKHSLTQRESVAWRDSSISPNGTDF) are disordered. Composition is skewed to polar residues over residues 517–529 (ITPSSKHSLTQRE) and 536–545 (SSISPNGTDF).

This sequence belongs to the ADIP family. Interacts with WRAP73.

It is found in the cell junction. It localises to the adherens junction. The protein resides in the cytoplasm. Its subcellular location is the cytoskeleton. The protein localises to the microtubule organizing center. It is found in the centrosome. It localises to the centriolar satellite. Functionally, belongs to an adhesion system, which plays a role in the organization of homotypic, interneuronal and heterotypic cell-cell adherens junctions (AJs). Involved in cell movement. Acts as a centrosome maturation factor, probably by maintaining the integrity of the pericentriolar material and proper microtubule nucleation at mitotic spindle poles. The function seems to implicate at least in part WRAP73; the SSX2IP:WRAP73 complex is proposed to act as regulator of spindle anchoring at the mitotic centrosome. This chain is Afadin- and alpha-actinin-binding protein B (ssx2ip-b), found in Xenopus laevis (African clawed frog).